A 442-amino-acid chain; its full sequence is 3-phosphoshikimate 1-carboxyvinyltransferase (442 aa).

3-phosphoshikimate contacts are provided by Lys-25, Ser-26, and Arg-30. Lys-25 lines the phosphoenolpyruvate pocket. Residues Gly-96 and Arg-124 each coordinate phosphoenolpyruvate. Residues Ser-171, Ser-172, Gln-173, Ser-203, Asp-325, and Lys-352 each coordinate 3-phosphoshikimate. A phosphoenolpyruvate-binding site is contributed by Gln-173. Residue Asp-325 is the Proton acceptor of the active site. Phosphoenolpyruvate is bound by residues Arg-356, Arg-400, and Lys-425.

The protein belongs to the EPSP synthase family. As to quaternary structure, monomer.

The protein localises to the cytoplasm. It catalyses the reaction 3-phosphoshikimate + phosphoenolpyruvate = 5-O-(1-carboxyvinyl)-3-phosphoshikimate + phosphate. The protein operates within metabolic intermediate biosynthesis; chorismate biosynthesis; chorismate from D-erythrose 4-phosphate and phosphoenolpyruvate: step 6/7. Catalyzes the transfer of the enolpyruvyl moiety of phosphoenolpyruvate (PEP) to the 5-hydroxyl of shikimate-3-phosphate (S3P) to produce enolpyruvyl shikimate-3-phosphate and inorganic phosphate. In Bordetella pertussis (strain Tohama I / ATCC BAA-589 / NCTC 13251), this protein is 3-phosphoshikimate 1-carboxyvinyltransferase.